A 1157-amino-acid polypeptide reads, in one-letter code: Cell division cycle and apoptosis regulator protein 1 (1157 aa).

2 disordered regions span residues 289 to 365 (PVRI…PRRV) and 608 to 641 (LQGDRKEADGEQEEEDKEDGDAKEISTPTHWSKL). Composition is skewed to basic and acidic residues over residues 300-341 (RRIE…DRSP) and 348-359 (ERSPRRERERSP). Residues 601-625 (KQQLVDKLQGDRKEADGEQEEEDKE) adopt a coiled-coil conformation. A compositionally biased stretch (acidic residues) spans 617 to 628 (GEQEEEDKEDGD). Residues 643–677 (PKIMKVNDLRKELESRTLSSKGLKSQLIARLTKQL) form the SAP domain. 4 stretches are compositionally biased toward basic and acidic residues: residues 685 to 694 (EQKELEKCEK), 701 to 721 (ERKSEDDKEEEERKRQEELER), 804 to 824 (EEKKDKEKKCKKEDKRERKED), and 838 to 861 (SSDDKIKLEEKEERKRDDRRKEDY). 2 disordered regions span residues 685 to 721 (EQKELEKCEKEEEEEEERKSEDDKEEEERKRQEELER) and 804 to 926 (EEKK…KDKK). Residues 862–896 (REEDDPDYENQDDYEPIAAEEDDGDYDDREDDDDD) show a composition bias toward acidic residues. Positions 897-926 (SSSKDKREDKRDGNRYSKERQSKDKEKDKK) are enriched in basic and acidic residues. The stretch at 1043–1128 (DVGSLLQKLE…DQLTNTIKNL (86 aa)) forms a coiled coil. At Ser1157 the chain carries Phosphoserine.

It localises to the cytoplasm. The protein resides in the perinuclear region. Functionally, transcriptional coactivator for nuclear receptors which may play an important role in regulating cell growth and apoptosis. The sequence is that of Cell division cycle and apoptosis regulator protein 1 (ccar1) from Xenopus laevis (African clawed frog).